The chain runs to 105 residues: MKLMYKIAVIGDKDSVLAFKILGVDVFITLDAQEARKTIDRIAKENYGIIFVTEQLAKDIPETIKRYNSEIIPAVILIPSNKGSLNIGLTNIDKNVEKAIGSKIM.

Belongs to the V-ATPase F subunit family.

Its function is as follows. Produces ATP from ADP in the presence of a proton gradient across the membrane. In Fusobacterium nucleatum subsp. nucleatum (strain ATCC 25586 / DSM 15643 / BCRC 10681 / CIP 101130 / JCM 8532 / KCTC 2640 / LMG 13131 / VPI 4355), this protein is V-type ATP synthase subunit F.